The sequence spans 83 residues: Large ribosomal subunit protein bL31B (83 aa).

This sequence belongs to the bacterial ribosomal protein bL31 family. Type B subfamily. In terms of assembly, part of the 50S ribosomal subunit.

In terms of biological role, binds the 23S rRNA. The protein is Large ribosomal subunit protein bL31B of Lactobacillus delbrueckii subsp. bulgaricus (strain ATCC 11842 / DSM 20081 / BCRC 10696 / JCM 1002 / NBRC 13953 / NCIMB 11778 / NCTC 12712 / WDCM 00102 / Lb 14).